The sequence spans 289 residues: ATP phosphoribosyltransferase (289 aa).

It belongs to the ATP phosphoribosyltransferase family. Long subfamily. The cofactor is Mg(2+).

Its subcellular location is the cytoplasm. It carries out the reaction 1-(5-phospho-beta-D-ribosyl)-ATP + diphosphate = 5-phospho-alpha-D-ribose 1-diphosphate + ATP. Its pathway is amino-acid biosynthesis; L-histidine biosynthesis; L-histidine from 5-phospho-alpha-D-ribose 1-diphosphate: step 1/9. Its activity is regulated as follows. Feedback inhibited by histidine. Its function is as follows. Catalyzes the condensation of ATP and 5-phosphoribose 1-diphosphate to form N'-(5'-phosphoribosyl)-ATP (PR-ATP). Has a crucial role in the pathway because the rate of histidine biosynthesis seems to be controlled primarily by regulation of HisG enzymatic activity. The chain is ATP phosphoribosyltransferase from Methanosarcina barkeri (strain Fusaro / DSM 804).